The sequence spans 234 residues: Carboxy-S-adenosyl-L-methionine synthase (234 aa).

S-adenosyl-L-methionine is bound by residues Tyr35, 60 to 62 (GCS), 83 to 84 (DN), 109 to 110 (DI), Asn124, and Arg191.

Belongs to the class I-like SAM-binding methyltransferase superfamily. Cx-SAM synthase family. In terms of assembly, homodimer.

It carries out the reaction prephenate + S-adenosyl-L-methionine = carboxy-S-adenosyl-L-methionine + 3-phenylpyruvate + H2O. Its function is as follows. Catalyzes the conversion of S-adenosyl-L-methionine (SAM) to carboxy-S-adenosyl-L-methionine (Cx-SAM). The protein is Carboxy-S-adenosyl-L-methionine synthase of Campylobacter hominis (strain ATCC BAA-381 / DSM 21671 / CCUG 45161 / LMG 19568 / NCTC 13146 / CH001A).